A 1100-amino-acid chain; its full sequence is MASSVEDQQLQQEEAESVKDVQSHYLRCPSPSFSMMSDRFSTVSDRFSVISGSEAESIFMEPIHLSSTIAAKKIISEELPPRPARVSSPPDSALEPAQQLMVEDLYSRVQELLDERSLYNTPCVLDIQRALLRDRLEAPLSPVDEVWPNVFIAEKSVAVNKGRLKRLGITHVLNAAHGTGVYTGPLFYSGMNIHYMGIEVDDFPDADISPHFRSCAEFLDDALLTHRGKVLVDSMMGVSRSAVLVAAYLMIFQNMSIMEALLEIRKKRAISPNEGFIKQLRQLNETLMEERDEDDDETLSQCSVIDARGRLEEQESVFGVKADSIMVEEEEDGGGSVISSVASSAAAAALRAGVQCGSQQPNMQQPADQPSLPGQTREDEDGDVDRMILEWQKRNEKYQSEDWWEAQLLCEDEDDGEDKTQRAVRPDDLESVTSEDVRMVKERIGRRPRRAASLAGSTSSCSSYVDLWKQRLQELEEQAAARHRLQDQDTSSETQQKKIDDDVQSILSDSSSMYNFCKKNKENLTPLERWKIKRIQFGWNKKENAENGEQSEAEPAAAPDLEDVNLTAYQTWKLKQQKKHGGEENKEEILQMSRGEDTATARRRQRREEVLERSRRNLQESQSVCGWETESALSSSIPLSAFCAGAFPSASVCGDDSMSVLSGRSSVLSGRSTRSLPPAVLETPAPPTPVLGPNGEQMVNIANIQNWIASVVNETLQQKQTEMLMGASVAPSRAGSVFSAGRGVDDDKSSVLSGLSASTGLSRSRAESVVSVGAKARSVLSAAGRAESVFSAGGASQLSCGSRKSKITTTSVPLYSLFQDQVNLHKLDTMEKEIKSDMRDKMASYEIKKITEDNKRSTLYKKKKPKEDDEDVDIAKSNGLEELEARTCEKPKPKRDYGRSGILNLPASANNPTSSIDEWLEHVRPPSSKPRVYDGDSGPIRMSRPAYEELQEPSGLDFTSRRSSVSVEVDEEEDYSFRFSSRNCADDDLDPELSYSSRRSPSFNGLSESTSFASRRSYSRYEDEERSSFQNHSIKQKSSVYEDSGRTAGSRRDEEEDEEISAFIAQIKQRARARVAEEMEDDEVLTAWRKQEESKSHDHK.

Residues 1 to 12 are compositionally biased toward polar residues; it reads MASSVEDQQLQQ. Positions 1-21 are disordered; it reads MASSVEDQQLQQEEAESVKDV. In terms of domain architecture, Tyrosine-protein phosphatase spans 141 to 289; it reads SPVDEVWPNV…LRQLNETLME (149 aa). Positions 356–374 are enriched in polar residues; sequence CGSQQPNMQQPADQPSLPG. 8 disordered regions span residues 356–383, 411–436, 479–504, 542–561, 575–615, 667–686, 888–1060, and 1075–1100; these read CGSQQPNMQQPADQPSLPGQTREDEDGD, EDEDDGEDKTQRAVRPDDLESVTSED, AAARHRLQDQDTSSETQQKKIDDDVQ, KENAENGEQSEAEPAAAPDL, KQQK…ERSR, VLSGRSTRSLPPAVLETPAP, CEKP…DEEI, and VAEEMEDDEVLTAWRKQEESKSHDHK. Residues 418-428 are compositionally biased toward basic and acidic residues; sequence DKTQRAVRPDD. A compositionally biased stretch (basic and acidic residues) spans 580-615; sequence HGGEENKEEILQMSRGEDTATARRRQRREEVLERSR. Positions 667–676 are enriched in low complexity; sequence VLSGRSTRSL. Basic and acidic residues predominate over residues 888-898; that stretch reads CEKPKPKRDYG. 3 stretches are compositionally biased toward polar residues: residues 907-916, 994-1013, and 1029-1041; these read ASANNPTSSI, SYSSRRSPSFNGLSESTSFA, and FQNHSIKQKSSVY. Residues 1089 to 1100 are compositionally biased toward basic and acidic residues; the sequence is RKQEESKSHDHK.

The protein belongs to the protein-tyrosine phosphatase family. Non-receptor class dual specificity subfamily. Expressed in muscle fibers in a regular striated pattern (at protein level).

It localises to the cytoplasm. The protein resides in the myofibril. Its subcellular location is the sarcomere. Functionally, required for myofiber maturation. In Danio rerio (Zebrafish), this protein is Serine/threonine/tyrosine-interacting-like protein 2 (styxl2).